Consider the following 167-residue polypeptide: MTRPTHPNALIWLLLSIAIIALDQATKAWVLTSLPEYIPVPVIHGFWNWYRSYNTGAAFSFLSDAGGWQMWLFIALALGISGLLTFWLSRTPRREWRSALPYALIIGGGIGNVIDRFLHGHVVDFIQWYVGSHYWPSFNLADSAIVAGAIGIGLLSLFDSKHSPKTP.

The next 3 membrane-spanning stretches (helical) occupy residues 10-30, 68-88, and 98-118; these read LIWL…KAWV, WQMW…TFWL, and SALP…DRFL. Catalysis depends on residues aspartate 124 and aspartate 142. A helical membrane pass occupies residues 138–158; that stretch reads FNLADSAIVAGAIGIGLLSLF.

This sequence belongs to the peptidase A8 family.

The protein localises to the cell inner membrane. It carries out the reaction Release of signal peptides from bacterial membrane prolipoproteins. Hydrolyzes -Xaa-Yaa-Zaa-|-(S,diacylglyceryl)Cys-, in which Xaa is hydrophobic (preferably Leu), and Yaa (Ala or Ser) and Zaa (Gly or Ala) have small, neutral side chains.. It functions in the pathway protein modification; lipoprotein biosynthesis (signal peptide cleavage). In terms of biological role, this protein specifically catalyzes the removal of signal peptides from prolipoproteins. The polypeptide is Lipoprotein signal peptidase (Xylella fastidiosa (strain 9a5c)).